Here is a 399-residue protein sequence, read N- to C-terminus: Pre-mycofactocin synthase (399 aa).

One can recognise an FMN hydroxy acid dehydrogenase domain in the interval 4 to 386 (ARDIWFETVA…VPEDILVPEG (383 aa)). FMN contacts are provided by S111 and Q131. Y133 lines the a 2-oxocarboxylate pocket. T159 contacts FMN. R168 lines the a 2-oxocarboxylate pocket. K257 contacts FMN. H281 acts as the Proton acceptor in catalysis. FMN is bound by residues 312 to 316 (DGGIR) and 335 to 336 (GR).

This sequence belongs to the FMN-dependent alpha-hydroxy acid dehydrogenase family. Requires FMN as cofactor.

The catalysed reaction is 3-amino-5-[(4-hydroxyphenyl)methyl]-4,4-dimethyl-2-pyrrolidin-2-one + O2 + H2O = pre-mycofactocin + H2O2 + NH4(+). Functionally, involved in the biosynthesis of the enzyme cofactor mycofactocin (MFT). Catalyzes the oxidative deamination of AHDP (3-amino-5-[(4-hydroxyphenyl)methyl]-4,4-dimethyl-2-pyrrolidin-2-one), forming an alpha-keto amide moiety on the resulting molecule, which is called pre-mycofactocin (PMFT). This reaction occurs via a 5-[(4-hydroxyphenyl)methyl]-3-imino-4,4-dimethylpyrrolidin-2-one intermediate, which converts to PMFT. The alpha-keto amide moiety is the redox-active center for the redox activity of mycofactocin. Is required for the in vivo ethanol assimilation in M.smegmatis. The sequence is that of Pre-mycofactocin synthase from Mycolicibacterium smegmatis (strain ATCC 700084 / mc(2)155) (Mycobacterium smegmatis).